The following is a 327-amino-acid chain: GTPase Obg (327 aa).

Residues 2–160 (HILKDSLSIT…LNLRLELSLI (159 aa)) form the Obg domain. The OBG-type G domain maps to 161–326 (ADIGLVGFPN…LVSELFALSR (166 aa)). Residues 167–174 (GFPNAGKS), 192–196 (FTTRF), 213–216 (DVPG), 280–283 (NKLD), and 307–309 (SIY) each bind GTP. Residues Ser174 and Thr194 each coordinate Mg(2+).

It belongs to the TRAFAC class OBG-HflX-like GTPase superfamily. OBG GTPase family. As to quaternary structure, monomer. Mg(2+) is required as a cofactor.

Its subcellular location is the cytoplasm. An essential GTPase which binds GTP, GDP and possibly (p)ppGpp with moderate affinity, with high nucleotide exchange rates and a fairly low GTP hydrolysis rate. Plays a role in control of the cell cycle, stress response, ribosome biogenesis and in those bacteria that undergo differentiation, in morphogenesis control. In Borrelia hermsii (strain HS1 / DAH), this protein is GTPase Obg.